The sequence spans 87 residues: Small ribosomal subunit protein bS20 (87 aa).

Belongs to the bacterial ribosomal protein bS20 family.

In terms of biological role, binds directly to 16S ribosomal RNA. This is Small ribosomal subunit protein bS20 from Geobacter sulfurreducens (strain ATCC 51573 / DSM 12127 / PCA).